Reading from the N-terminus, the 2645-residue chain is Non-reducing polyketide synthase AC (2645 aa).

An N-terminal acylcarrier protein transacylase domain (SAT) region spans residues 73–2366 (ALQNLNEWLK…TDIVHNAWPM (2294 aa)). The active-site Proton donor/acceptor; for transacylase activity is H260. The 419-residue stretch at 416 to 834 (DDKIAVIGMA…GSNSSLVVTE (419 aa)) folds into the Ketosynthase family 3 (KS3) domain. Residues C583, H718, and H757 each act as for beta-ketoacyl synthase activity in the active site. Residues 943–1252 (CFGGQISTYI…HAVSITTDKS (310 aa)) form a malonyl-CoA:ACP transacylase (MAT) domain region. The N-terminal hotdog fold stretch occupies residues 1324–1457 (SKGFTSFAGY…GVCSFCSATD (134 aa)). In terms of domain architecture, PKS/mFAS DH spans 1324–1637 (SKGFTSFAGY…YNKVPLPVMR (314 aa)). A product template (PT) domain region spans residues 1330–1641 (FAGYIDGNQR…PLPVMRGILG (312 aa)). H1359 (proton acceptor; for dehydratase activity) is an active-site residue. The C-terminal hotdog fold stretch occupies residues 1487 to 1637 (NIMQGTANIY…YNKVPLPVMR (151 aa)). Residue D1542 is the Proton donor; for dehydratase activity of the active site. Residues 1684–1696 (NGTTGTENPQIKS) are compositionally biased toward polar residues. Residues 1684 to 1716 (NGTTGTENPQIKSKTNKVKKVPTRKSGGSDLET) are disordered. The segment covering 1697 to 1706 (KTNKVKKVPT) has biased composition (basic residues). A Carrier domain is found at 1711-1788 (GSDLETPAKT…SLVKYIREIR (78 aa)). S1748 carries the O-(pantetheine 4'-phosphoryl)serine modification. Residues 1794-1805 (QNVDDSESESEE) are compositionally biased toward acidic residues. The tract at residues 1794–1816 (QNVDDSESESEELQQQATPIDSA) is disordered. Residue Y2009 is the For methyltransferase activity of the active site. The segment at 2023 to 2197 (EVFVEKIGSS…SVGYGHVDWT (175 aa)) is methyltransferase (CMeT) domain. Residues 2269 to 2573 (CVLITGATGS…NIIPFYDWVQ (305 aa)) are NADPH-binding (R) domain.

The protein operates within mycotoxin biosynthesis. In terms of biological role, non-reducing polyketide synthase; part of the gene cluster that mediates the biosynthesis of the selective antifungal agent ascochitine, an o-quinone methide that plays a possible protective role against other microbial competitors in nature and is considered to be important for pathogenicity of legume-associated Didymella species. The pathway probably begins with the synthesis of a keto-aldehyde intermediate by the ascochitine non-reducing polyketide synthase pksAC from successive condensations of 4 malonyl-CoA units, presumably with a simple acetyl-CoA starter unit. Release of the keto-aldehyde intermediate is consistent with the presence of the C-terminal reductive release domain. The HR-PKS (orf7) probably makes a diketide starter unit which is passed to the non-reducing polyketide synthase pksAC for further extension, producing ascochital and ascochitine. The aldehyde dehydrogenase (orf1), the 2-oxoglutarate-dependent dioxygenase (orf3) and the dehydrogenase (orf9) are probably involved in subsequent oxidations of methyl groups to the carboxylic acid of the heterocyclic ring. The ascochitine gene cluster also includes a gene encoding a short peptide (orf2) that is often found in secondary metabolite gene clusters and which function has still to be determined. This is Non-reducing polyketide synthase AC from Didymella fabae (Leaf and pod spot disease fungus).